The following is a 105-amino-acid chain: Small ribosomal subunit protein uS10 (105 aa).

It belongs to the universal ribosomal protein uS10 family. As to quaternary structure, part of the 30S ribosomal subunit.

Its function is as follows. Involved in the binding of tRNA to the ribosomes. The protein is Small ribosomal subunit protein uS10 of Thermus thermophilus (strain ATCC BAA-163 / DSM 7039 / HB27).